The sequence spans 179 residues: Inorganic pyrophosphatase (179 aa).

Residues Lys-30, Arg-44, and Tyr-56 each contribute to the substrate site. The Mg(2+) site is built by Asp-66, Asp-71, and Asp-103. Position 142 (Tyr-142) interacts with substrate.

The protein belongs to the PPase family. As to quaternary structure, homohexamer. Requires Mg(2+) as cofactor.

The protein localises to the cytoplasm. The enzyme catalyses diphosphate + H2O = 2 phosphate + H(+). In terms of biological role, catalyzes the hydrolysis of inorganic pyrophosphate (PPi) forming two phosphate ions. This is Inorganic pyrophosphatase from Rhodospirillum rubrum (strain ATCC 11170 / ATH 1.1.1 / DSM 467 / LMG 4362 / NCIMB 8255 / S1).